The sequence spans 92 residues: Small ribosomal subunit protein uS19 (92 aa).

The protein belongs to the universal ribosomal protein uS19 family.

Its function is as follows. Protein S19 forms a complex with S13 that binds strongly to the 16S ribosomal RNA. This is Small ribosomal subunit protein uS19 from Rippkaea orientalis (strain PCC 8801 / RF-1) (Cyanothece sp. (strain PCC 8801)).